Consider the following 111-residue polypeptide: Ghrelin (111 aa).

A signal peptide spans Met1–Ala26. Residues Ser28 to Pro37 are compositionally biased toward polar residues. The tract at residues Ser28–Asp53 is disordered. Ser29 is lipidated: O-decanoyl serine; alternate. Ser29 carries O-hexanoyl serine; alternate lipidation. A lipid anchor (O-octanoyl serine; alternate) is attached at Ser29. Residues Gln38–Asp53 show a composition bias toward basic and acidic residues. Position 47 is a valine amide (Val47). Residues Asp51–Glu111 constitute a propeptide, removed in mature form.

The protein belongs to the motilin family. O-octanoylated by GOAT/MBOAT4. O-octanoylation or O-decanoylation is essential for activity. The O-decanoylated form ghrelin-21-C10 differs in the length of the carbon backbone of the carboxylic acid forming an ester bond with Ser-29. 44% of eel ghrelin is O-decanoylated. Highest levels in stomach and anterior intestine. Lower levels in posterior intestine, kidney and brain. Low levels in heart, head kidney and middle intestine.

The protein resides in the secreted. In terms of biological role, ligand for growth hormone secretagogue receptor type 1 (GHSR). Induces the release of growth hormone from the pituitary. Has an appetite-stimulating effect, induces adiposity and stimulates gastric acid secretion. Involved in growth regulation. In Anguilla japonica (Japanese eel), this protein is Ghrelin (ghrl).